Here is a 508-residue protein sequence, read N- to C-terminus: Glucose-1-phosphate adenylyltransferase small subunit 1, chloroplastic (508 aa).

Residues Met1–Ser27 form a disordered region. Residues Met1–Ala59 constitute a chloroplast transit peptide. Low complexity predominate over residues Ser15–Ser27.

The protein belongs to the bacterial/plant glucose-1-phosphate adenylyltransferase family. As to quaternary structure, heterotetramer. In terms of tissue distribution, seeds.

It localises to the plastid. The protein resides in the chloroplast. The enzyme catalyses alpha-D-glucose 1-phosphate + ATP + H(+) = ADP-alpha-D-glucose + diphosphate. It functions in the pathway glycan biosynthesis; starch biosynthesis. Its activity is regulated as follows. Activated by 3'phosphoglycerate, inhibited by orthophosphate. Allosteric regulation. Its function is as follows. This protein plays a role in synthesis of starch. It catalyzes the synthesis of the activated glycosyl donor, ADP-glucose from Glc-1-P and ATP. The chain is Glucose-1-phosphate adenylyltransferase small subunit 1, chloroplastic (AGPC) from Vicia faba (Broad bean).